The following is a 476-amino-acid chain: Protein transport protein Sec61 subunit alpha (476 aa).

The Cytoplasmic segment spans residues 2-33; the sequence is GIKFLEFIKPFCAVLPEIQKPERKIQFREKVL. A helical membrane pass occupies residues 34–53; the sequence is WTAITLFIFLVCCQIPLFGI. The Lumenal portion of the chain corresponds to 54-76; that stretch reads MSSDSADPFYWMRVILASNRGTL. Residues 77-96 form a helical membrane-spanning segment; sequence MELGISPIVTSGLIMQLLAG. Residues 97–117 are Cytoplasmic-facing; the sequence is AKIIEVGDTPKDRALFNGAQK. The helical transmembrane segment at 118–138 threads the bilayer; the sequence is LFGMIITIGQAIVYVMTGMYG. Residues 139–144 are Lumenal-facing; the sequence is DPSEMG. A helical transmembrane segment spans residues 145 to 165; sequence AGICLLIIIQLFVAGLIVLLL. The Cytoplasmic portion of the chain corresponds to 166–172; the sequence is DELLQKG. A helical membrane pass occupies residues 173–193; it reads YGLGSGISLFIATNICETIVW. The Lumenal portion of the chain corresponds to 194–240; it reads KAFSPTTVNTGRGTEFEGAIIALFHLLATRTDKVRALREAFYRQNLP. Residues 241 to 261 form a helical membrane-spanning segment; it reads NILNLIATVFVFAVVIYFQGF. At 262 to 288 the chain is on the cytoplasmic side; it reads RVDLPIKSARYRGQYNTYPIKLFYTSN. A helical transmembrane segment spans residues 289–309; the sequence is IPIILQSALVSNLYVISQMLS. Topologically, residues 310–354 are lumenal; it reads TRFSGNFLVNLLGTWSDATSGGPARAYPVAGLCYYLSPPESFGSV. Residues 355 to 375 form a helical membrane-spanning segment; it reads LDDPVHAAIYIVFMLGSCAFF. Topologically, residues 376–420 are cytoplasmic; it reads SKTWIEVSGSSAKDVAKQLKEQQMVMRGHRETSMVHELNRYIPTA. The chain crosses the membrane as a helical span at residues 421–441; that stretch reads AAFGGLCIGGLSVMADFLGAI. Over 442-445 the chain is Lumenal; that stretch reads GSGT. The chain crosses the membrane as a helical span at residues 446–462; it reads GILLAVTIIYQYFEIFV. The Cytoplasmic portion of the chain corresponds to 463 to 476; the sequence is KEQSEMGSMGALLF.

This sequence belongs to the SecY/SEC61-alpha family. In terms of assembly, the SEC61 channel-forming translocon complex consists of channel-forming core components SEC61A1, SEC61B and SEC61G and different auxiliary components such as SEC62 and SEC63. The SEC61 channel associates with the multi-pass translocon (MPT) complex.

Its subcellular location is the endoplasmic reticulum membrane. Its function is as follows. Component of SEC61 channel-forming translocon complex that mediates transport of signal peptide-containing precursor polypeptides across the endoplasmic reticulum (ER). Forms a ribosome receptor and a gated pore in the ER membrane, both functions required for cotranslational translocation of nascent polypeptides. May cooperate with auxiliary protein SEC62, SEC63 and HSPA5/BiP to enable post-translational transport of small presecretory proteins. The SEC61 channel is also involved in ER membrane insertion of transmembrane proteins: it mediates membrane insertion of the first few transmembrane segments of proteins, while insertion of subsequent transmembrane regions of multi-pass membrane proteins is mediated by the multi-pass translocon (MPT) complex. This Notothenia angustata (Rockcod) protein is Protein transport protein Sec61 subunit alpha (sec61a).